The primary structure comprises 403 residues: MVQISQIGAVLAVCSTLTVAAPTKGKARFNVPQVAVPMKAVHHPAVAYARALHKFGMKVPKAVSDAARGSVPTTPTKDDEQYVTQVTVGQGKLNLDLDTGSGDLWVFSTETPKDQSQGHNLYMPTSKSKRLDGYSWEITYGDMSSAGGDVFLDTVSIGNVTASSQAVESAKKVSDQFAKDKATDGLMGLSFSVLNTVQPKPQTTFFDTVLKQLEKPLFTCTLKHGQPGSYDFGYIDDSKHSGEIAYTNVDNSQGWWGFTAESYSIGGGSNSTHSFHGAQHRGTRGSSIDGIADTGTTLMLLSDDVVQEYYGKVQGAKNDQQQGGWVFPCDAKLPDFTLSISGYNAVVPGKFMNYQAVGSVCFGGLQSVGSSGGVPNIFGDVFLKSQFVVWDTEGPRIGFAPQA.

An N-terminal signal peptide occupies residues 1-20 (MVQISQIGAVLAVCSTLTVA). Positions 21-67 (APTKGKARFNVPQVAVPMKAVHHPAVAYARALHKFGMKVPKAVSDAA) are cleaved as a propeptide — activation peptide. Residues 82-400 (YVTQVTVGQG…DTEGPRIGFA (319 aa)) enclose the Peptidase A1 domain. The active site involves aspartate 98. N-linked (GlcNAc...) asparagine glycosylation is found at asparagine 159 and asparagine 270. The active site involves aspartate 293. A disulfide bridge links cysteine 329 with cysteine 361.

This sequence belongs to the peptidase A1 family.

The protein resides in the secreted. It carries out the reaction Hydrolysis of proteins with broad specificity. Generally favors hydrophobic residues in P1 and P1', but also accepts Lys in P1, which leads to activation of trypsinogen. Does not clot milk.. Functionally, secreted aspartic endopeptidase that allows assimilation of proteinaceous substrates. Can catalyze hydrolysis of the major structural proteins of basement membrane, elastin, collagen, and laminin. Thought to play a significant role in virulence. The polypeptide is Aspartic protease PEP1 (PEP1) (Arthroderma benhamiae (strain ATCC MYA-4681 / CBS 112371) (Trichophyton mentagrophytes)).